The chain runs to 101 residues: Small ribosomal subunit protein uS10 (101 aa).

Belongs to the universal ribosomal protein uS10 family. In terms of assembly, part of the 30S ribosomal subunit.

Functionally, involved in the binding of tRNA to the ribosomes. The protein is Small ribosomal subunit protein uS10 of Cytophaga hutchinsonii (strain ATCC 33406 / DSM 1761 / CIP 103989 / NBRC 15051 / NCIMB 9469 / D465).